We begin with the raw amino-acid sequence, 318 residues long: Probable tyrosine phosphatase protein N1 (318 aa).

Positions 26 to 292 constitute a Tyrosine-protein phosphatase domain; the sequence is IVRLEHHQVI…LILQPGYYVL (267 aa). Residue C233 is the Phosphocysteine intermediate of the active site.

This sequence belongs to the protein-tyrosine phosphatase family.

The catalysed reaction is O-phospho-L-tyrosyl-[protein] + H2O = L-tyrosyl-[protein] + phosphate. The chain is Probable tyrosine phosphatase protein N1 (N3) from Microplitis demolitor bracovirus (isolate Webb) (MdBV).